We begin with the raw amino-acid sequence, 410 residues long: Elongation factor Tu (410 aa).

The tr-type G domain occupies lysine 10–glutamate 214. The tract at residues glycine 19–threonine 26 is G1. Residue glycine 19–threonine 26 coordinates GTP. Threonine 26 provides a ligand contact to Mg(2+). The tract at residues glycine 60–asparagine 64 is G2. The interval aspartate 81–glycine 84 is G3. Residues aspartate 81–histidine 85 and asparagine 136–aspartate 139 contribute to the GTP site. The G4 stretch occupies residues asparagine 136–aspartate 139. Positions serine 174 to leucine 176 are G5.

It belongs to the TRAFAC class translation factor GTPase superfamily. Classic translation factor GTPase family. EF-Tu/EF-1A subfamily. As to quaternary structure, monomer.

The protein resides in the cytoplasm. The catalysed reaction is GTP + H2O = GDP + phosphate + H(+). GTP hydrolase that promotes the GTP-dependent binding of aminoacyl-tRNA to the A-site of ribosomes during protein biosynthesis. This Arthrospira platensis (Spirulina platensis) protein is Elongation factor Tu.